The chain runs to 65 residues: Protein translocase subunit SecE (65 aa).

Residues 38-58 (IVIVTVVFFLIFFYALDLGIG) form a helical membrane-spanning segment.

This sequence belongs to the SecE/SEC61-gamma family. As to quaternary structure, component of the Sec protein translocase complex. Heterotrimer consisting of SecY, SecE and SecG subunits. The heterotrimers can form oligomers, although 1 heterotrimer is thought to be able to translocate proteins. Interacts with the ribosome. Interacts with SecDF, and other proteins may be involved. Interacts with SecA.

It is found in the cell membrane. Essential subunit of the Sec protein translocation channel SecYEG. Clamps together the 2 halves of SecY. May contact the channel plug during translocation. The polypeptide is Protein translocase subunit SecE (Staphylococcus carnosus (strain TM300)).